Consider the following 156-residue polypeptide: Small ribosomal subunit protein uS7 (156 aa).

Belongs to the universal ribosomal protein uS7 family. Part of the 30S ribosomal subunit. Contacts proteins S9 and S11.

One of the primary rRNA binding proteins, it binds directly to 16S rRNA where it nucleates assembly of the head domain of the 30S subunit. Is located at the subunit interface close to the decoding center, probably blocks exit of the E-site tRNA. The protein is Small ribosomal subunit protein uS7 of Brucella melitensis biotype 1 (strain ATCC 23456 / CCUG 17765 / NCTC 10094 / 16M).